The chain runs to 215 residues: Putative B3 domain-containing protein Os11g0625400 (215 aa).

A DNA-binding region (TF-B3 1) is located at residues 1–51; that stretch reads MTVELEKIAGSFFISKGWKTFVHRTGLLSGQYIRFQVLTPSKINVLLFDKK. Positions 92–117 are disordered; that stretch reads SHTSNKETSSDSRTESMTDIPSSSDN. Residues 95-107 are compositionally biased toward basic and acidic residues; that stretch reads SNKETSSDSRTES. The segment covering 108–117 has biased composition (polar residues); it reads MTDIPSSSDN. Positions 123-215 form a DNA-binding region, TF-B3 2; that stretch reads DIKNYISIIG…PNVKITIDVL (93 aa).

It localises to the nucleus. The chain is Putative B3 domain-containing protein Os11g0625400 from Oryza sativa subsp. japonica (Rice).